Here is a 71-residue protein sequence, read N- to C-terminus: Biotinylated protein TB7.3 homolog (71 aa).

The Biotinyl-binding domain maps to 2–71; sequence AEDVRAEIVA…QAGHLIAVID (70 aa). Lysine 37 is subject to N6-biotinyllysine.

The protein is Biotinylated protein TB7.3 homolog of Mycolicibacterium smegmatis (strain ATCC 700084 / mc(2)155) (Mycobacterium smegmatis).